Consider the following 504-residue polypeptide: Maturase K (504 aa).

This sequence belongs to the intron maturase 2 family. MatK subfamily.

Its subcellular location is the plastid. It is found in the chloroplast. Usually encoded in the trnK tRNA gene intron. Probably assists in splicing its own and other chloroplast group II introns. The polypeptide is Maturase K (Hamamelis japonica (Japanese witch hazel)).